The primary structure comprises 288 residues: Polyamine aminopropyltransferase (288 aa).

In terms of domain architecture, PABS spans 11 to 245 (IEWYPRGYGV…SPWSFLVGVK (235 aa)). Gln-36 is an S-methyl-5'-thioadenosine binding site. The spermidine site is built by His-67 and Asp-91. S-methyl-5'-thioadenosine-binding positions include Glu-111 and 148–149 (DG). Residue Asp-166 is the Proton acceptor of the active site. 166 to 169 (DSTD) contributes to the spermidine binding site. Residue Pro-173 coordinates S-methyl-5'-thioadenosine.

This sequence belongs to the spermidine/spermine synthase family. As to quaternary structure, homodimer or homotetramer.

It localises to the cytoplasm. It catalyses the reaction S-adenosyl 3-(methylsulfanyl)propylamine + agmatine = N(1)-(3-aminopropyl)agmatine + S-methyl-5'-thioadenosine + H(+). The enzyme catalyses S-adenosyl 3-(methylsulfanyl)propylamine + putrescine = S-methyl-5'-thioadenosine + spermidine + H(+). The catalysed reaction is cadaverine + S-adenosyl 3-(methylsulfanyl)propylamine = aminopropylcadaverine + S-methyl-5'-thioadenosine + H(+). It functions in the pathway amine and polyamine biosynthesis; spermidine biosynthesis; spermidine from putrescine: step 1/1. Involved in the biosynthesis of polyamines which are thought to support the growth of thermophilic microorganisms under high-temperature conditions. It seems that long-chain and branched-chain of polyamines effectively stabilize DNA and RNA, respectively. Catalyzes the irreversible transfer of a propylamine group from the amino donor S-adenosylmethioninamine (decarboxy-AdoMet) to agmatine to yield N1-aminopropylagmatine. It can also use cadaverine (1,5-diaminopentane) and putrescine (1,4-diaminobutane) as substrate with a lower activity than that of agmatine. The reaction involves a nucleophilic attack on the C-3 methylene of the propylamine moiety adjacent to the positively charged sulfur of decarboxy-AdoMet. The sequence is that of Polyamine aminopropyltransferase from Thermococcus kodakarensis (strain ATCC BAA-918 / JCM 12380 / KOD1) (Pyrococcus kodakaraensis (strain KOD1)).